The following is a 220-amino-acid chain: Chaperone protein TorD (220 aa).

This sequence belongs to the TorD/DmsD family. TorD subfamily.

The protein resides in the cytoplasm. Involved in the biogenesis of TorA. Acts on TorA before the insertion of the molybdenum cofactor and, as a result, probably favors a conformation of the apoenzyme that is competent for acquiring the cofactor. In Vibrio cholerae serotype O1 (strain ATCC 39541 / Classical Ogawa 395 / O395), this protein is Chaperone protein TorD.